The chain runs to 302 residues: D-alanine--D-alanine ligase B (302 aa).

An ATP-grasp domain is found at 99-294; it reads KKVLKAENIR…YSKFIDLIIE (196 aa). Residue 126–181 participates in ATP binding; sequence IEEIGYPVFVKPNNGGSSVATFKVYKKEDIKNSVMEGLKYDEEVIIESFIKGREIT. Residues Asp248, Glu261, and Asn263 each contribute to the Mg(2+) site.

This sequence belongs to the D-alanine--D-alanine ligase family. Mg(2+) serves as cofactor. The cofactor is Mn(2+).

It is found in the cytoplasm. It carries out the reaction 2 D-alanine + ATP = D-alanyl-D-alanine + ADP + phosphate + H(+). It functions in the pathway cell wall biogenesis; peptidoglycan biosynthesis. In terms of biological role, cell wall formation. The polypeptide is D-alanine--D-alanine ligase B (Clostridium perfringens (strain 13 / Type A)).